A 461-amino-acid polypeptide reads, in one-letter code: Acetylornithine aminotransferase, mitochondrial (461 aa).

Residues 36 to 56 form a disordered region; sequence YATASQLTHPDPTEDSPSGKM. Position 312 is an N6-(pyridoxal phosphate)lysine (lysine 312).

This sequence belongs to the class-III pyridoxal-phosphate-dependent aminotransferase family. The cofactor is pyridoxal 5'-phosphate.

It is found in the mitochondrion matrix. It catalyses the reaction N(2)-acetyl-L-ornithine + 2-oxoglutarate = N-acetyl-L-glutamate 5-semialdehyde + L-glutamate. Its pathway is amino-acid biosynthesis; L-arginine biosynthesis; N(2)-acetyl-L-ornithine from L-glutamate: step 4/4. The protein is Acetylornithine aminotransferase, mitochondrial (arg-8) of Neurospora crassa (strain ATCC 24698 / 74-OR23-1A / CBS 708.71 / DSM 1257 / FGSC 987).